The following is a 142-amino-acid chain: Probable histone H2AXb (142 aa).

The span at 1–12 shows a compositional bias: gly residues; sequence MSSGAGSGTTKG. The tract at residues 1–28 is disordered; it reads MSSGAGSGTTKGGRGKPKATKSVSRSSK. S139 is modified (phosphoserine; by ATM and ATR). Positions 139–140 match the [ST]-Q motif motif; sequence SQ.

The protein belongs to the histone H2A family. As to quaternary structure, the nucleosome is a histone octamer containing two molecules each of H2A, H2B, H3 and H4 assembled in one H3-H4 heterotetramer and two H2A-H2B heterodimers. The octamer wraps approximately 147 bp of DNA. Interacts with numerous proteins required for DNA damage signaling and repair when phosphorylated on Ser-139. In terms of processing, phosphorylated to form H2AXS139ph (gamma-H2AX) in response to DNA double strand breaks (DSBs) generated by exogenous genotoxic agents and by stalled replication forks, and may also occur during meiotic recombination events. Phosphorylation can extend up to several thousand nucleosomes from the actual site of the DSB and may mark the surrounding chromatin for recruitment of proteins required for DNA damage signaling and repair. Widespread phosphorylation may also serve to amplify the damage signal or aid repair of persistent lesions. H2AXS139ph in response to ionizing radiation is mediated by ATM while defects in DNA replication induce H2AXS139ph subsequent to activation of ATR. Dephosphorylation of H2AXS139ph by PP2A is required for DNA DSB repair. In terms of tissue distribution, expressed in meristems and dividing cells.

The protein localises to the nucleus. It is found in the chromosome. Variant histone H2A which replaces conventional H2A in a subset of nucleosomes. Nucleosomes wrap and compact DNA into chromatin, limiting DNA accessibility to the cellular machineries which require DNA as a template. Histones thereby play a central role in transcription regulation, DNA repair, DNA replication and chromosomal stability. DNA accessibility is regulated via a complex set of post-translational modifications of histones, also called histone code, and nucleosome remodeling. Required for checkpoint-mediated arrest of cell cycle progression in response to low doses of ionizing radiation and for efficient repair of DNA double strand breaks (DSBs) specifically when modified by C-terminal phosphorylation. This Arabidopsis thaliana (Mouse-ear cress) protein is Probable histone H2AXb.